The sequence spans 361 residues: Chorismate synthase (361 aa).

R47 lines the NADP(+) pocket. Residues 124-126 (RAS), G286, 301-305 (KPTAT), and R327 contribute to the FMN site.

The protein belongs to the chorismate synthase family. As to quaternary structure, homotetramer. It depends on FMNH2 as a cofactor.

It carries out the reaction 5-O-(1-carboxyvinyl)-3-phosphoshikimate = chorismate + phosphate. Its pathway is metabolic intermediate biosynthesis; chorismate biosynthesis; chorismate from D-erythrose 4-phosphate and phosphoenolpyruvate: step 7/7. Its function is as follows. Catalyzes the anti-1,4-elimination of the C-3 phosphate and the C-6 proR hydrogen from 5-enolpyruvylshikimate-3-phosphate (EPSP) to yield chorismate, which is the branch point compound that serves as the starting substrate for the three terminal pathways of aromatic amino acid biosynthesis. This reaction introduces a second double bond into the aromatic ring system. The chain is Chorismate synthase from Akkermansia muciniphila (strain ATCC BAA-835 / DSM 22959 / JCM 33894 / BCRC 81048 / CCUG 64013 / CIP 107961 / Muc).